Reading from the N-terminus, the 98-residue chain is Beta-elicitin DRE-beta (98 aa).

3 disulfide bridges follow: Cys3/Cys71, Cys27/Cys56, and Cys51/Cys95.

It belongs to the elicitin family.

The protein localises to the secreted. Induces local and distal defense responses (incompatible hypersensitive reaction) in plants from the solanaceae and cruciferae families. Elicits leaf necrosis and causes the accumulation of pathogenesis-related proteins. Might interact with the lipidic molecules of the plasma membrane. The protein is Beta-elicitin DRE-beta of Phytophthora drechsleri.